A 350-amino-acid chain; its full sequence is Ketol-acid reductoisomerase (NADP(+)) (350 aa).

Residues 4–187 (VSITTDYSRM…GGARANIIKT (184 aa)) form the KARI N-terminal Rossmann domain. NADP(+) is bound by residues 30–33 (YGSQ), Arg-53, Thr-58, and 88–91 (DMVQ). His-113 is an active-site residue. Position 139 (Gly-139) interacts with NADP(+). The KARI C-terminal knotted domain maps to 188 to 333 (TFKEETETDL…KQLRAKMVWL (146 aa)). Residues Asp-196, Glu-200, Glu-232, and Glu-236 each coordinate Mg(2+). Ser-257 contacts substrate.

The protein belongs to the ketol-acid reductoisomerase family. Mg(2+) is required as a cofactor.

It carries out the reaction (2R)-2,3-dihydroxy-3-methylbutanoate + NADP(+) = (2S)-2-acetolactate + NADPH + H(+). The catalysed reaction is (2R,3R)-2,3-dihydroxy-3-methylpentanoate + NADP(+) = (S)-2-ethyl-2-hydroxy-3-oxobutanoate + NADPH + H(+). The protein operates within amino-acid biosynthesis; L-isoleucine biosynthesis; L-isoleucine from 2-oxobutanoate: step 2/4. It participates in amino-acid biosynthesis; L-valine biosynthesis; L-valine from pyruvate: step 2/4. Involved in the biosynthesis of branched-chain amino acids (BCAA). Catalyzes an alkyl-migration followed by a ketol-acid reduction of (S)-2-acetolactate (S2AL) to yield (R)-2,3-dihydroxy-isovalerate. In the isomerase reaction, S2AL is rearranged via a Mg-dependent methyl migration to produce 3-hydroxy-3-methyl-2-ketobutyrate (HMKB). In the reductase reaction, this 2-ketoacid undergoes a metal-dependent reduction by NADPH to yield (R)-2,3-dihydroxy-isovalerate. The protein is Ketol-acid reductoisomerase (NADP(+)) of Xylella fastidiosa (strain 9a5c).